A 678-amino-acid polypeptide reads, in one-letter code: Geranylgeranyl transferase type-2 subunit alpha 1 (678 aa).

PFTA repeat units follow at residues 40 to 74 (YTNEAIELSTKLLEINPEAYTAWNYRKLAVEDRLA), 86 to 120 (ILDEELRVVESALRQNFKSYGAWHHRKWVLSKGHS), 121 to 155 (SVGNELRLLEKFQKLDSRNFHAWNYRRFVVELTNR), 156 to 190 (SEQDELQYTDDMINNNFSNYSAWHNRSVLLSSLLA), and 201 to 235 (KIPEEYDFVHSAIFTEPDDQSGWFYHLWLLDQTLN). LRR repeat units follow at residues 510-532 (MNNLVCLRLNNLSLSRIASVEKL), 533-554 (LFVQMLDLSHNELHSTEGLEAM), 555-578 (QLLSCLNLSHNRIRSFSALDSLRH), 580-604 (KQLKVLDVSHNHIGKHSVDTTRYLC), and 638-663 (DLNLKQLDIAGNEIAGEEFSSFVLQV).

It belongs to the protein prenyltransferase subunit alpha family. Heterotrimer composed of the alpha subunit RGTA, the beta subunit RGTB and REP; within this trimer, RGTA and RGTB form the catalytic component, while REP mediates peptide substrate binding.

The enzyme catalyses geranylgeranyl diphosphate + L-cysteinyl-[protein] = S-geranylgeranyl-L-cysteinyl-[protein] + diphosphate. Its activity is regulated as follows. The enzymatic reaction requires the aid of the Rab escort protein REP. Catalyzes the transfer of a geranylgeranyl moiety from geranylgeranyl diphosphate to both cysteines of Rab proteins with the C-terminal sequence -CCXX, CXXX, -XCCX and -XCXC, such as RABA1A, RABA2A, RABF2A and RABG2. In vitro, can prenylate PGGTI targets with the C-terminal Cys-aliphatic-aliphatic-X (CaaX) with leucine in the terminal position. Substrates with the C-terminal sequence -CSIL such as ARAC11/ROP1 or GG2/AGG2 are prenylated independently of REP and when the alpha subunit is associated with a beta subunit (RGTB1 or RGTB2). In Arabidopsis thaliana (Mouse-ear cress), this protein is Geranylgeranyl transferase type-2 subunit alpha 1.